The chain runs to 200 residues: GTP-dependent dephospho-CoA kinase (200 aa).

The GTP site is built by D56, V57, V58, D75, and E132.

This sequence belongs to the GTP-dependent DPCK family.

It carries out the reaction 3'-dephospho-CoA + GTP = GDP + CoA + H(+). The protein operates within cofactor biosynthesis; coenzyme A biosynthesis. Catalyzes the GTP-dependent phosphorylation of the 3'-hydroxyl group of dephosphocoenzyme A to form coenzyme A (CoA). This is GTP-dependent dephospho-CoA kinase from Caldivirga maquilingensis (strain ATCC 700844 / DSM 13496 / JCM 10307 / IC-167).